A 488-amino-acid polypeptide reads, in one-letter code: Bile acid receptor (488 aa).

Residue Lys133 forms a Glycyl lysine isopeptide (Lys-Gly) (interchain with G-Cter in SUMO1) linkage. Positions 135-210 (DELCVVCGDR…MGMLAECMYT (76 aa)) form a DNA-binding region, nuclear receptor. An NR C4-type zinc finger spans residues 138 to 158 (CVVCGDRASGYHYNALTCEGC). Ser146 and Ser165 each carry phosphoserine; by PKC/PRKCA. An N6-acetyllysine; by EP300 modification is found at Lys168. An NR C4-type zinc finger spans residues 174–198 (CKNGGNCVMDMYMRRKCQECRLRKC). Residue Lys221 is modified to N6-methyllysine; by SETD7. N6-acetyllysine; by EP300 is present on Lys228. One can recognise an NR LBD domain in the interval 264 to 488 (DQQTLLDYIM…PLLCEIWDVQ (225 aa)). A Glycyl lysine isopeptide (Lys-Gly) (interchain with G-Cter in SUMO1) cross-link involves residue Lys291. Chenodeoxycholate contacts are provided by Arg347, Tyr377, and Tyr385. Thr458 is modified (phosphothreonine; by PKC/PRKCZ). His463 provides a ligand contact to chenodeoxycholate.

It belongs to the nuclear hormone receptor family. NR1 subfamily. In terms of assembly, heterodimer with RXRA; the heterodimerization enhances the binding affinity for LXXLL motifs from coactivators. Binds DNA predominantly as a heterodimer with RXRA. After activation by agonist binding interacts with coactivators. Interacts with PPARGC1A, SMARCA4 and EP300. Interacts with NCOA1, NCOA2, CARM1, SETD7, PRMT1, GPS2, SMARCA4 and MED1. Interacts with XRCC5 and XRCC6; decreasing NR1H4/FXR transactivation activity towards ABCB11/BSEP. Interacts with PAGR1 and NCOA6; indicative for an association with an MLL2/MLL3 complex (ASCOM). Interacts with NR5A2. In terms of processing, acetylated by EP300. Lys-228 as is the major acetylation site for EP300; the dynamicly regulated acetylation inhibits heterodimerization with RXRA and transactivation activity. Deacetylated by SIRT1. Elevated acetylation levels are found in metabolic disease states (mouse models of obesity and type II diabetes). Post-translationally, methylation may increase transactivation of target genes. Phosphorylation by PKC/PRKCA increases transactivation activity by promoting association with PPARGC1A. In terms of processing, sumoylated upon ligand binding. As to expression, expressed in liver and kidney. Expressed in pancreatic beta cells and macrophages. Expressed in the villus epithelium in adult ileum, with highest expression in the intervillus regions. Expression in colon is reduced by inflammation.

It localises to the nucleus. Ligand-activated transcription factor. Receptor for bile acids (BAs) such as chenodeoxycholic acid (CDCA), lithocholic acid, deoxycholic acid (DCA) and allocholic acid (ACA). Plays a essential role in BA homeostasis through the regulation of genes involved in BA synthesis, conjugation and enterohepatic circulation. Also regulates lipid and glucose homeostasis and is involved in innate immune response. The FXR-RXR heterodimer binds predominantly to farnesoid X receptor response elements (FXREs) containing two inverted repeats of the consensus sequence 5'-AGGTCA-3' in which the monomers are spaced by 1 nucleotide (IR-1) but also to tandem repeat DR1 sites with lower affinity, and can be activated by either FXR or RXR-specific ligands. It is proposed that monomeric nuclear receptors such as NR5A2/LRH-1 bound to coregulatory nuclear responsive element (NRE) halfsites located in close proximity to FXREs modulate transcriptional activity. In the liver activates transcription of the corepressor NR0B2 thereby indirectly inhibiting CYP7A1 and CYP8B1 (involved in BA synthesis) implicating at least in part histone demethylase KDM1A resulting in epigenomic repression, and SLC10A1/NTCP (involved in hepatic uptake of conjugated BAs). Activates transcription of the repressor MAFG (involved in regulation of BA synthesis). Activates transcription of SLC27A5/BACS and BAAT (involved in BA conjugation), ABCB11/BSEP (involved in bile salt export) by directly recruiting histone methyltransferase CARM1, and ABCC2/MRP2 (involved in secretion of conjugated BAs) and ABCB4 (involved in secretion of phosphatidylcholine in the small intestine). In ileal enterocytes activates FABP6/IBABP (involved in cytosolic transport), SLC51A/OSTA and SLC51B/OSTB (involved in secretion of conjugated BAs to the portal blood), and repressor NR0B2/SHP thereby indirectly inhibiting SLC10A2/ASBT (involved in BA uptake). In the intestine activates FGF15 expression and secretion leading to hepatic CYP7A1 repression; the function also involves the coordinated induction of hepatic KLB/beta-klotho expression. Transcriptional activation of FABP6/IBAP and SCD1 but not of ABCB11 is isoform-specific. Regulates transcription of liver UGT2B4 and SULT2A1 involved in BA detoxification; binding to the UGT2B4 promoter seems to imply a monomeric transactivation independent of RXRA. Modulates lipid homeostasis by activating liver NR0B2/SHP-mediated repression of SREBF1 isoform SREBP-1C (involved in de novo lipogenesis), expression of PLTP (involved in HDL formation), SCARB1 (involved in HDL hepatic uptake), APOE, APOC1, APOC4, VLDLR and SDC1 (involved in the hepatic uptake of LDL and IDL remnants), and inhibiting expression of MTTP (involved in VLDL assembly). Increases expression of APOC2 (promoting lipoprotein lipase activity implicated in triglyceride clearance). Transrepresses APOA1 probably involving a monomeric competition with NR2A1 for binding to a DR1 element. Also reduces triglyceride clearance by inhibiting expression of ANGPTL3 and APOC3 (both involved in inhibition of lipoprotein lipase). Involved in glucose homeostasis by modulating hepatic gluconeogenesis through activation of NR0B2/SHP-mediated repression of respective genes. Modulates glycogen synthesis (inducing phosphorylation of glycogen synthase kinase-3). Modulates glucose-stimulated insulin secretion and is involved in insulin resistance. Involved in intestinal innate immunity. Plays a role in protecting the distal small intestine against bacterial overgrowth and preservation of the epithelial barrier. Down-regulates inflammatory cytokine expression in several types of immune cells including macrophages and mononuclear cells. Mediates transrepression of TLR4-induced cytokine expression; the function seems to require its sumoylation and prevents N-CoR nuclear receptor corepressor clearance from target genes such as IL1B and NOS2. Involved in the TLR9-mediated protective mechanism in intestinal inflammation. Plays a anti-inflammatory role in liver inflammation; proposed to inhibit pro-inflammatory (but not antiapoptotic) NF-kappa-B signaling. Functionally, activates transcription of IBAP and SDC1. The protein is Bile acid receptor (Nr1h4) of Mus musculus (Mouse).